The following is a 616-amino-acid chain: UvrABC system protein C (616 aa).

The GIY-YIG domain occupies 21 to 100 (TCPGVYQFKN…IKDLKPRYNI (80 aa)). The UVR domain maps to 214 to 249 (GALIRTLSAEMHRYADELRFEEAAELKIQIEGLRKY).

Belongs to the UvrC family. As to quaternary structure, interacts with UvrB in an incision complex.

It is found in the cytoplasm. Its function is as follows. The UvrABC repair system catalyzes the recognition and processing of DNA lesions. UvrC both incises the 5' and 3' sides of the lesion. The N-terminal half is responsible for the 3' incision and the C-terminal half is responsible for the 5' incision. The protein is UvrABC system protein C of Prosthecochloris aestuarii (strain DSM 271 / SK 413).